Here is a 353-residue protein sequence, read N- to C-terminus: UPF0658 Golgi apparatus membrane protein C23H3.04 (353 aa).

Transmembrane regions (helical) follow at residues 39-59, 76-96, 103-123, 172-192, 226-246, 249-269, 281-301, and 318-338; these read IFFL…EGYC, SLPI…YLCV, NIIE…YSIV, PFLI…GFLA, LLKI…MVLP, AVVE…ILTL, LMMT…FKII, and MITT…AIGF.

This sequence belongs to the UPF0658 family.

The protein localises to the golgi apparatus membrane. In Schizosaccharomyces pombe (strain 972 / ATCC 24843) (Fission yeast), this protein is UPF0658 Golgi apparatus membrane protein C23H3.04.